The chain runs to 307 residues: ADP,ATP carrier protein 3 (307 aa).

3 Solcar repeats span residues 10–103, 114–206, and 214–300; these read TNFA…IKLM, KWFA…LKPL, and GSFL…LQMI. A run of 5 helical transmembrane segments spans residues 12–39, 80–104, 112–132, 182–203, and 217–237; these read FAINFLMGGVSAAIAKTAASPIERVKIL, TANVIRYFPTQALNFAFKDKIKLMF, YGKWFAGNLASGGAAGALSLL, FMPSVVGIVVYRGLYFGMFDSL, and LASFLLGWVVTTGASTCSYPL. Positions 85 and 97 each coordinate ADP. Arginine 241 contacts ADP. The segment at 241–246 is important for transport activity; sequence RRRMMM. The Nucleotide carrier signature motif signature appears at 241–246; sequence RRRMMM. The chain crosses the membrane as a helical span at residues 277–297; the sequence is CGANILRSVAGAGVISMYDQL.

The protein belongs to the mitochondrial carrier (TC 2.A.29) family. In terms of assembly, monomer.

The protein resides in the mitochondrion inner membrane. The catalysed reaction is ADP(in) + ATP(out) = ADP(out) + ATP(in). Its activity is regulated as follows. The matrix-open state (m-state) is inhibited by the membrane-permeable bongkrekic acid (BKA). The cytoplasmic-open state (c-state) is inhibited by the membrane-impermeable toxic inhibitor carboxyatractyloside (CATR). Its function is as follows. ADP:ATP antiporter that mediates import of ADP into the mitochondrial matrix for ATP synthesis, and export of ATP out to fuel the cell. Cycles between the cytoplasmic-open state (c-state) and the matrix-open state (m-state): operates by the alternating access mechanism with a single substrate-binding site intermittently exposed to either the cytosolic (c-state) or matrix (m-state) side of the inner mitochondrial membrane. In Saccharomyces cerevisiae (strain ATCC 204508 / S288c) (Baker's yeast), this protein is ADP,ATP carrier protein 3 (AAC3).